The following is an 876-amino-acid chain: Phosphoenolpyruvate carboxylase (876 aa).

Catalysis depends on residues histidine 138 and lysine 544.

Belongs to the PEPCase type 1 family. It depends on Mg(2+) as a cofactor.

The catalysed reaction is oxaloacetate + phosphate = phosphoenolpyruvate + hydrogencarbonate. Its function is as follows. Forms oxaloacetate, a four-carbon dicarboxylic acid source for the tricarboxylic acid cycle. The sequence is that of Phosphoenolpyruvate carboxylase from Marinomonas sp. (strain MWYL1).